Reading from the N-terminus, the 465-residue chain is Hexokinase-4 (465 aa).

The 445-residue stretch at 10 to 454 (AAKKEKVEQI…SGRGAALVSA (445 aa)) folds into the Hexokinase domain. The segment at 67 to 203 (EGSEVGDFLS…DFEMDVVAMV (137 aa)) is hexokinase small subdomain. Residue 78-83 (DLGGTN) coordinates ATP. Residues 151–152 (SF), 168–169 (TK), and 204–205 (ND) contribute to the substrate site. The tract at residues 204-443 (NDTVATMISC…CEITFIESEE (240 aa)) is hexokinase large subdomain. Position 228 (T228) interacts with ATP. Substrate contacts are provided by N231, E256, and E290. ATP is bound by residues 295 to 296 (GK), 332 to 336 (TRFVS), and 411 to 415 (SVYKL).

The protein belongs to the hexokinase family. Monomer. Interacts with MIDN; the interaction occurs preferentially at low glucose levels and results in inhibition of hexokinase activity. Interacts with GCKR; leading to sequestration in the nucleus.

The protein resides in the cytoplasm. It is found in the nucleus. Its subcellular location is the mitochondrion. The catalysed reaction is a D-hexose + ATP = a D-hexose 6-phosphate + ADP + H(+). The enzyme catalyses D-fructose + ATP = D-fructose 6-phosphate + ADP + H(+). It carries out the reaction D-glucose + ATP = D-glucose 6-phosphate + ADP + H(+). It catalyses the reaction D-mannose + ATP = D-mannose 6-phosphate + ADP + H(+). It functions in the pathway carbohydrate metabolism; hexose metabolism. Its pathway is carbohydrate degradation; glycolysis; D-glyceraldehyde 3-phosphate and glycerone phosphate from D-glucose: step 1/4. Its activity is regulated as follows. Subject to allosteric regulation. Low glucose and high fructose-6-phosphate triggers association with the inhibitor GCKR followed by sequestration in the nucleus. Functionally, catalyzes the phosphorylation of hexose, such as D-glucose, D-fructose and D-mannose, to hexose 6-phosphate (D-glucose 6-phosphate, D-fructose 6-phosphate and D-mannose 6-phosphate, respectively). Compared to other hexokinases, has a weak affinity for D-glucose, and is effective only when glucose is abundant. Mainly expressed in pancreatic beta cells and the liver and constitutes a rate-limiting step in glucose metabolism in these tissues. Since insulin secretion parallels glucose metabolism and the low glucose affinity of GCK ensures that it can change its enzymatic activity within the physiological range of glucose concentrations, GCK acts as a glucose sensor in the pancreatic beta cell. In pancreas, plays an important role in modulating insulin secretion. In liver, helps to facilitate the uptake and conversion of glucose by acting as an insulin-sensitive determinant of hepatic glucose usage. Required to provide D-glucose 6-phosphate for the synthesis of glycogen. Mediates the initial step of glycolysis by catalyzing phosphorylation of D-glucose to D-glucose 6-phosphate. The chain is Hexokinase-4 from Homo sapiens (Human).